The sequence spans 313 residues: Porphobilinogen deaminase (313 aa).

S-(dipyrrolylmethanemethyl)cysteine is present on Cys242.

This sequence belongs to the HMBS family. Monomer. The cofactor is dipyrromethane.

It carries out the reaction 4 porphobilinogen + H2O = hydroxymethylbilane + 4 NH4(+). The protein operates within porphyrin-containing compound metabolism; protoporphyrin-IX biosynthesis; coproporphyrinogen-III from 5-aminolevulinate: step 2/4. Functionally, tetrapolymerization of the monopyrrole PBG into the hydroxymethylbilane pre-uroporphyrinogen in several discrete steps. The polypeptide is Porphobilinogen deaminase (Pseudomonas putida (strain ATCC 47054 / DSM 6125 / CFBP 8728 / NCIMB 11950 / KT2440)).